Consider the following 701-residue polypeptide: Putative pectinesterase/pectinesterase inhibitor 43 (701 aa).

The N-terminal stretch at 1-22 (MNKYVLLGVTALIMAMVICVEA) is a signal peptide. Residues 42-195 (MITKTTVSII…QHLTSNGLAI (154 aa)) form a pectinesterase inhibitor 43 region. 2 stretches are compositionally biased toward low complexity: residues 221–256 (GILG…VDSS) and 263–275 (SSSE…SSNN). The disordered stretch occupies residues 221–351 (GILGSGSSRD…DPLRKLNPLN (131 aa)). N-linked (GlcNAc...) asparagine glycosylation is present at N267. Composition is skewed to polar residues over residues 276–287 (RPLDSSKNQQME) and 313–338 (QKST…SSEN). A pectinesterase 43 region spans residues 391 to 688 (NVVVAKDGSG…FAPGNFLRGN (298 aa)). Residues T467 and Q497 each coordinate substrate. Residue D520 is the Proton donor; for pectinesterase activity of the active site. C534 and C554 are oxidised to a cystine. Catalysis depends on D541, which acts as the Nucleophile; for pectinesterase activity. Residues R609 and W611 each contribute to the substrate site. The N-linked (GlcNAc...) asparagine glycan is linked to N637.

The protein in the N-terminal section; belongs to the PMEI family. In the C-terminal section; belongs to the pectinesterase family. In terms of tissue distribution, expressed in flower buds.

The protein resides in the secreted. It localises to the cell wall. The catalysed reaction is [(1-&gt;4)-alpha-D-galacturonosyl methyl ester](n) + n H2O = [(1-&gt;4)-alpha-D-galacturonosyl](n) + n methanol + n H(+). It functions in the pathway glycan metabolism; pectin degradation; 2-dehydro-3-deoxy-D-gluconate from pectin: step 1/5. Acts in the modification of cell walls via demethylesterification of cell wall pectin. The sequence is that of Putative pectinesterase/pectinesterase inhibitor 43 (PME43) from Arabidopsis thaliana (Mouse-ear cress).